A 212-amino-acid polypeptide reads, in one-letter code: Probable GTP-binding protein EngB (212 aa).

In terms of domain architecture, EngB-type G spans 38-210; it reads SLPEIAFVGK…KASLAKCIKP (173 aa). Residues 46 to 53, 73 to 77, 91 to 94, 158 to 161, and 189 to 191 each bind GTP; these read GKSNVGKS, GRTRQ, DLPG, TKSD, and VSS. Positions 53 and 75 each coordinate Mg(2+).

The protein belongs to the TRAFAC class TrmE-Era-EngA-EngB-Septin-like GTPase superfamily. EngB GTPase family. Mg(2+) is required as a cofactor.

In terms of biological role, necessary for normal cell division and for the maintenance of normal septation. The sequence is that of Probable GTP-binding protein EngB from Rickettsia felis (strain ATCC VR-1525 / URRWXCal2) (Rickettsia azadi).